The sequence spans 769 residues: Multiple C2 domain and transmembrane region protein 5 (769 aa).

C2 domains follow at residues 23–143 (SVTG…PQWY), 184–305 (PEGV…SRWF), and 345–467 (YSSD…THSY). The Ca(2+) site is built by D56, D62, D109, D111, and D116. 2 consecutive transmembrane segments (helical) span residues 604-624 (IILV…LFLI) and 712-732 (LFVL…FQVV).

This sequence belongs to the MCTP family. Requires Ca(2+) as cofactor. Highly expressed in roots meristems and shoot apical meristems (SAMs). Observed in flowers.

The protein resides in the endoplasmic reticulum membrane. Functionally, may function as a signaling molecule by regulating the trafficking of other regulators. This is Multiple C2 domain and transmembrane region protein 5 from Arabidopsis thaliana (Mouse-ear cress).